We begin with the raw amino-acid sequence, 291 residues long: Bifunctional protein FolD (291 aa).

NADP(+) is bound by residues 166–168 (GAS) and Ile232.

Belongs to the tetrahydrofolate dehydrogenase/cyclohydrolase family. As to quaternary structure, homodimer.

The enzyme catalyses (6R)-5,10-methylene-5,6,7,8-tetrahydrofolate + NADP(+) = (6R)-5,10-methenyltetrahydrofolate + NADPH. It catalyses the reaction (6R)-5,10-methenyltetrahydrofolate + H2O = (6R)-10-formyltetrahydrofolate + H(+). It functions in the pathway one-carbon metabolism; tetrahydrofolate interconversion. In terms of biological role, catalyzes the oxidation of 5,10-methylenetetrahydrofolate to 5,10-methenyltetrahydrofolate and then the hydrolysis of 5,10-methenyltetrahydrofolate to 10-formyltetrahydrofolate. The chain is Bifunctional protein FolD from Photorhabdus laumondii subsp. laumondii (strain DSM 15139 / CIP 105565 / TT01) (Photorhabdus luminescens subsp. laumondii).